Here is a 248-residue protein sequence, read N- to C-terminus: ATP synthase subunit a (248 aa).

The next 6 membrane-spanning stretches (helical) occupy residues 27-47, 83-103, 113-133, 142-162, 192-212, and 215-235; these read FTNSSAYMFGTVALIAILMLV, FFPLVFSLFMFIAVSNLIGIV, LIVTVALALLVFFTVLIYGFS, LFVPSGVPIYILPLVVFIEVI, FVAMLGALGVVGWFGAVLPLG, and IALTALELLVAFLQAYVFAIL.

It belongs to the ATPase A chain family. F-type ATPases have 2 components, CF(1) - the catalytic core - and CF(0) - the membrane proton channel. CF(1) has five subunits: alpha(3), beta(3), gamma(1), delta(1), epsilon(1). CF(0) has four main subunits: a, b, b' and c.

Its subcellular location is the cell inner membrane. Its function is as follows. Key component of the proton channel; it plays a direct role in the translocation of protons across the membrane. The protein is ATP synthase subunit a of Rhodopseudomonas palustris (strain ATCC BAA-98 / CGA009).